The primary structure comprises 277 residues: Bifunctional protein FolD (277 aa).

NADP(+) is bound by residues G164–S166, S189, and T230.

The protein belongs to the tetrahydrofolate dehydrogenase/cyclohydrolase family. In terms of assembly, homodimer.

The catalysed reaction is (6R)-5,10-methylene-5,6,7,8-tetrahydrofolate + NADP(+) = (6R)-5,10-methenyltetrahydrofolate + NADPH. The enzyme catalyses (6R)-5,10-methenyltetrahydrofolate + H2O = (6R)-10-formyltetrahydrofolate + H(+). The protein operates within one-carbon metabolism; tetrahydrofolate interconversion. Catalyzes the oxidation of 5,10-methylenetetrahydrofolate to 5,10-methenyltetrahydrofolate and then the hydrolysis of 5,10-methenyltetrahydrofolate to 10-formyltetrahydrofolate. The protein is Bifunctional protein FolD of Clostridium perfringens (strain ATCC 13124 / DSM 756 / JCM 1290 / NCIMB 6125 / NCTC 8237 / Type A).